Consider the following 493-residue polypeptide: Guanosine-5'-triphosphate,3'-diphosphate pyrophosphatase (493 aa).

This sequence belongs to the GppA/Ppx family. GppA subfamily.

The catalysed reaction is guanosine 3'-diphosphate 5'-triphosphate + H2O = guanosine 3',5'-bis(diphosphate) + phosphate + H(+). The protein operates within purine metabolism; ppGpp biosynthesis; ppGpp from GTP: step 2/2. In terms of biological role, catalyzes the conversion of pppGpp to ppGpp. Guanosine pentaphosphate (pppGpp) is a cytoplasmic signaling molecule which together with ppGpp controls the 'stringent response', an adaptive process that allows bacteria to respond to amino acid starvation, resulting in the coordinated regulation of numerous cellular activities. The sequence is that of Guanosine-5'-triphosphate,3'-diphosphate pyrophosphatase from Salmonella heidelberg (strain SL476).